We begin with the raw amino-acid sequence, 109 residues long: Nucleoid-associated protein Bcer98_0019 (109 aa).

The protein belongs to the YbaB/EbfC family. In terms of assembly, homodimer.

It is found in the cytoplasm. The protein resides in the nucleoid. Binds to DNA and alters its conformation. May be involved in regulation of gene expression, nucleoid organization and DNA protection. This chain is Nucleoid-associated protein Bcer98_0019, found in Bacillus cytotoxicus (strain DSM 22905 / CIP 110041 / 391-98 / NVH 391-98).